Consider the following 475-residue polypeptide: Serralysin G (475 aa).

Residues Met1 to Ser14 constitute a propeptide that is removed on maturation. His186 provides a ligand contact to Zn(2+). Glu187 is an active-site residue. Positions 190 and 226 each coordinate Zn(2+). Ca(2+) contacts are provided by Arg261, Gly263, Thr265, Asp293, Gly295, Gly296, Asp298, Glu337, Gly342, Gly344, Asp346, Asn351, Asn355, Gly359, Gly360, Ala361, Gly362, Asp364, Gly368, Gly370, Gly371, Asp373, Gly377, Gly378, Ala379, Gly380, Asp382, Asp391, Asp398, and Asp408. Hemolysin-type calcium-binding repeat units lie at residues Ile340 to Ile357 and Asp358 to Leu375.

Belongs to the peptidase M10B family. Requires Ca(2+) as cofactor. The cofactor is Zn(2+).

It is found in the secreted. The enzyme catalyses Preferential cleavage of bonds with hydrophobic residues in P1'.. This is Serralysin G (prtG) from Dickeya chrysanthemi (Pectobacterium chrysanthemi).